Reading from the N-terminus, the 388-residue chain is Putative N(4)-(beta-N-acetylglucosaminyl)-L-asparaginase GL17147 (388 aa).

Positions 1 to 20 (MYKAQYLWLFGLVLISRSAT) are cleaved as a signal peptide. Cystine bridges form between Cys-94–Cys-99 and Cys-193–Cys-209. Thr-240 (nucleophile) is an active-site residue. Substrate-binding positions include 268-271 (RVGD) and 291-294 (TGDG). A disulfide bridge links Cys-351 with Cys-378.

Belongs to the Ntn-hydrolase family. As to quaternary structure, heterotetramer of two alpha and two beta chains arranged as a dimer of alpha/beta heterodimers. Cleaved into an alpha and beta chain by autocatalysis; this activates the enzyme. The N-terminal residue of the beta subunit is responsible for the nucleophile hydrolase activity.

It carries out the reaction N(4)-(beta-N-acetyl-D-glucosaminyl)-L-asparagine + H2O = N-acetyl-beta-D-glucosaminylamine + L-aspartate + H(+). Cleaves the GlcNAc-Asn bond which joins oligosaccharides to the peptide of asparagine-linked glycoproteins. The polypeptide is Putative N(4)-(beta-N-acetylglucosaminyl)-L-asparaginase GL17147 (Drosophila persimilis (Fruit fly)).